A 360-amino-acid polypeptide reads, in one-letter code: MSIRSNFVRLLKKQVNIIKLQKKCSHSVAVIGAPFSKGQKRRGVEHGPAAIRSAGLIDRLSNLGCNVCDFGDLHFSQVPNDEQYNSIVKHPRTVGLACKVLAKEVGKAVGAGHTCVTLGGDHSLAFGSITGHAQQCPDLCVIWVDAHADINTPLTTPSGNLHGQPVSFLLRELQDKIPPIPGFSWAKPCLSKSDIVYIGLRDLDPAEQFILKNYNISYYSMRHIDCMGIRKVMEKTFDQLLGRRDRPIHLSFDIDAFDPALAPATGTPVIGGLTYREGVYITEEIHNTGMLSALDLVEVNPVLATTSEEVKATANLAVDVIASCFGQTREGAHTRADTIIDVLPTPSTSYESDNEEQVRI.

The Mn(2+) site is built by histidine 122, aspartate 145, histidine 147, and aspartate 149. Substrate is bound by residues 147-151 (HADIN), 158-160 (SGN), and aspartate 204. Aspartate 253 and aspartate 255 together coordinate Mn(2+). Substrate is bound by residues threonine 267 and glutamate 298.

The protein belongs to the arginase family. Homotrimer. Requires Mn(2+) as cofactor. In terms of tissue distribution, expressed at differing tadpole stages in tail, intestine, hindlimb and trunk region. Strongest in tadpole tail.

The catalysed reaction is L-arginine + H2O = urea + L-ornithine. The protein operates within nitrogen metabolism; urea cycle; L-ornithine and urea from L-arginine: step 1/1. As well as its role in the urea cycle, may be involved in tissue remodeling. The polypeptide is Arginase, non-hepatic 3 (arg2-c) (Xenopus laevis (African clawed frog)).